Consider the following 94-residue polypeptide: Small ribosomal subunit protein bS18c (94 aa).

Belongs to the bacterial ribosomal protein bS18 family. As to quaternary structure, part of the 30S ribosomal subunit.

It is found in the plastid. The protein localises to the chloroplast. The protein is Small ribosomal subunit protein bS18c of Manihot esculenta (Cassava).